We begin with the raw amino-acid sequence, 605 residues long: Poly(3-hydroxyalkanoate) polymerase (605 aa).

In terms of domain architecture, AB hydrolase-1 spans 319–527 (IETAIDMIGV…VLAGSGHIAG (209 aa)). Cys-341 is an active-site residue.

Belongs to the PHA/PHB synthase family.

It is found in the cytoplasm. The polypeptide is Poly(3-hydroxyalkanoate) polymerase (phaC) (Methylorubrum extorquens (Methylobacterium dichloromethanicum)).